A 253-amino-acid chain; its full sequence is Small ribosomal subunit protein uS3 (253 aa).

The region spanning 38–106 is the KH type-2 domain; it reads IRKYIHARLS…EVQINIFEIK (69 aa). Residues 216 to 253 are disordered; it reads AGMDKKQAGQGGGKGGDSPRGDRKPFNKGGKPDARKRK. The segment covering 232–253 has biased composition (basic and acidic residues); sequence DSPRGDRKPFNKGGKPDARKRK.

Belongs to the universal ribosomal protein uS3 family. Part of the 30S ribosomal subunit. Forms a tight complex with proteins S10 and S14.

Binds the lower part of the 30S subunit head. Binds mRNA in the 70S ribosome, positioning it for translation. The polypeptide is Small ribosomal subunit protein uS3 (Flavobacterium psychrophilum (strain ATCC 49511 / DSM 21280 / CIP 103535 / JIP02/86)).